The sequence spans 416 residues: Imidazolonepropionase (416 aa).

2 residues coordinate Fe(3+): His-78 and His-80. Residues His-78 and His-80 each coordinate Zn(2+). The 4-imidazolone-5-propanoate site is built by Arg-87, Tyr-150, and His-183. Tyr-150 provides a ligand contact to N-formimidoyl-L-glutamate. His-248 lines the Fe(3+) pocket. Position 248 (His-248) interacts with Zn(2+). Gln-251 lines the 4-imidazolone-5-propanoate pocket. Asp-323 contacts Fe(3+). Asp-323 is a binding site for Zn(2+). Residues Asn-325 and Gly-327 each coordinate N-formimidoyl-L-glutamate. Thr-328 contributes to the 4-imidazolone-5-propanoate binding site.

Belongs to the metallo-dependent hydrolases superfamily. HutI family. Requires Zn(2+) as cofactor. It depends on Fe(3+) as a cofactor.

Its subcellular location is the cytoplasm. It catalyses the reaction 4-imidazolone-5-propanoate + H2O = N-formimidoyl-L-glutamate. The protein operates within amino-acid degradation; L-histidine degradation into L-glutamate; N-formimidoyl-L-glutamate from L-histidine: step 3/3. Its function is as follows. Catalyzes the hydrolytic cleavage of the carbon-nitrogen bond in imidazolone-5-propanoate to yield N-formimidoyl-L-glutamate. It is the third step in the universal histidine degradation pathway. This chain is Imidazolonepropionase, found in Vibrio campbellii (strain ATCC BAA-1116).